Here is a 200-residue protein sequence, read N- to C-terminus: dITP/XTP pyrophosphatase (200 aa).

7–12 (SNNYHK) serves as a coordination point for substrate. The active-site Proton acceptor is Asp68. Asp68 contributes to the Mg(2+) binding site. Residues Ser69, 147-150 (FGYD), Lys170, and 175-176 (HR) contribute to the substrate site.

The protein belongs to the HAM1 NTPase family. As to quaternary structure, homodimer. Mg(2+) is required as a cofactor.

It carries out the reaction XTP + H2O = XMP + diphosphate + H(+). The catalysed reaction is dITP + H2O = dIMP + diphosphate + H(+). It catalyses the reaction ITP + H2O = IMP + diphosphate + H(+). Pyrophosphatase that catalyzes the hydrolysis of nucleoside triphosphates to their monophosphate derivatives, with a high preference for the non-canonical purine nucleotides XTP (xanthosine triphosphate), dITP (deoxyinosine triphosphate) and ITP. Seems to function as a house-cleaning enzyme that removes non-canonical purine nucleotides from the nucleotide pool, thus preventing their incorporation into DNA/RNA and avoiding chromosomal lesions. This Acholeplasma laidlawii (strain PG-8A) protein is dITP/XTP pyrophosphatase.